The primary structure comprises 109 residues: Small ribosomal subunit protein bS6 (109 aa).

The protein belongs to the bacterial ribosomal protein bS6 family.

Its function is as follows. Binds together with bS18 to 16S ribosomal RNA. In Anaplasma phagocytophilum (strain HZ), this protein is Small ribosomal subunit protein bS6.